Reading from the N-terminus, the 152-residue chain is Superoxide dismutase [Cu-Zn] (152 aa).

Positions 45, 47, and 62 each coordinate Cu cation. The cysteines at positions 56 and 145 are disulfide-linked. Zn(2+) is bound by residues His62, His70, His79, and Asp82. His119 provides a ligand contact to Cu cation.

Belongs to the Cu-Zn superoxide dismutase family. In terms of assembly, homodimer. Requires Cu cation as cofactor. It depends on Zn(2+) as a cofactor.

It localises to the cytoplasm. It carries out the reaction 2 superoxide + 2 H(+) = H2O2 + O2. Destroys radicals which are normally produced within the cells and which are toxic to biological systems. The protein is Superoxide dismutase [Cu-Zn] (SODCC) of Capsicum annuum (Capsicum pepper).